Consider the following 333-residue polypeptide: PDZ domain-containing protein GIPC1 (333 aa).

Basic residues predominate over residues 1-11 (MPLGLGRRKKA). The segment at 1–55 (MPLGLGRRKKAPPLVENEEAEPSRSGLGVGEPGPLGGSGAGESQMGLPPPPASLR) is disordered. The segment covering 27 to 40 (LGVGEPGPLGGSGA) has biased composition (gly residues). The residue at position 68 (Ser68) is a Phosphoserine. The 81-residue stretch at 133-213 (EVEVFKSEDA…GRTFTLKLTE (81 aa)) folds into the PDZ domain. The tract at residues 221-244 (ISQRSSGGHPGSGPQLGTGRGTLR) is disordered. Phosphoserine is present on residues Ser222, Ser225, and Ser232. The segment covering 228 to 240 (GHPGSGPQLGTGR) has biased composition (gly residues). Position 242 is a phosphothreonine (Thr242). Residue Ser247 is modified to Phosphoserine.

It belongs to the GIPC family. As to quaternary structure, interacts with SDC4/syndecan-4 and SEMA4C/semaphorin-4C. Interacts with RGS19 (C-terminus), GLUT1 (C-terminus), ACTN1, KIF1B, MYO6 and PLEKHG5. Widely expressed.

The protein resides in the cytoplasm. It is found in the membrane. In terms of biological role, may be involved in G protein-linked signaling. This chain is PDZ domain-containing protein GIPC1 (Gipc1), found in Rattus norvegicus (Rat).